The primary structure comprises 514 residues: ATP synthase subunit alpha (514 aa).

170–177 is an ATP binding site; the sequence is GDRQIGKT.

It belongs to the ATPase alpha/beta chains family. F-type ATPases have 2 components, CF(1) - the catalytic core - and CF(0) - the membrane proton channel. CF(1) has five subunits: alpha(3), beta(3), gamma(1), delta(1), epsilon(1). CF(0) has three main subunits: a(1), b(2) and c(9-12). The alpha and beta chains form an alternating ring which encloses part of the gamma chain. CF(1) is attached to CF(0) by a central stalk formed by the gamma and epsilon chains, while a peripheral stalk is formed by the delta and b chains.

It is found in the cell inner membrane. It carries out the reaction ATP + H2O + 4 H(+)(in) = ADP + phosphate + 5 H(+)(out). Its function is as follows. Produces ATP from ADP in the presence of a proton gradient across the membrane. The alpha chain is a regulatory subunit. This Pseudomonas fluorescens (strain Pf0-1) protein is ATP synthase subunit alpha.